A 119-amino-acid polypeptide reads, in one-letter code: Holo-[acyl-carrier-protein] synthase (119 aa).

Mg(2+)-binding residues include D8 and E58.

Belongs to the P-Pant transferase superfamily. AcpS family. It depends on Mg(2+) as a cofactor.

The protein localises to the cytoplasm. It catalyses the reaction apo-[ACP] + CoA = holo-[ACP] + adenosine 3',5'-bisphosphate + H(+). Transfers the 4'-phosphopantetheine moiety from coenzyme A to a Ser of acyl-carrier-protein. This is Holo-[acyl-carrier-protein] synthase from Streptococcus mutans serotype c (strain ATCC 700610 / UA159).